A 216-amino-acid chain; its full sequence is Probable succinyl-CoA:3-ketoacid coenzyme A transferase subunit B (216 aa).

Residue glutamate 47 is part of the active site.

Belongs to the 3-oxoacid CoA-transferase subunit B family. Heterodimer of a subunit A and a subunit B.

The catalysed reaction is a 3-oxo acid + succinyl-CoA = a 3-oxoacyl-CoA + succinate. This is Probable succinyl-CoA:3-ketoacid coenzyme A transferase subunit B (scoB) from Bacillus subtilis (strain 168).